A 128-amino-acid chain; its full sequence is Small ribosomal subunit protein uS9 (128 aa).

The span at 97–113 (RSEGFMTRDSRSVERKK) shows a compositional bias: basic and acidic residues. Residues 97–128 (RSEGFMTRDSRSVERKKPGQPKARRRFQFSKR) are disordered. Residues 114–128 (PGQPKARRRFQFSKR) show a composition bias toward basic residues.

It belongs to the universal ribosomal protein uS9 family.

The sequence is that of Small ribosomal subunit protein uS9 from Phocaeicola vulgatus (strain ATCC 8482 / DSM 1447 / JCM 5826 / CCUG 4940 / NBRC 14291 / NCTC 11154) (Bacteroides vulgatus).